A 1771-amino-acid polypeptide reads, in one-letter code: Myosin-H heavy chain (1771 aa).

The Myosin N-terminal SH3-like domain occupies 7–57; that stretch reads CGKEKVWVPNPEKGWINGDLIKEIPGEGWLVRDENGKEIKIEKDELRMQNP. In terms of domain architecture, Myosin motor spans 61–840; the sequence is EGIDDMTSLS…IIANLELLRS (780 aa). 154-161 contributes to the ATP binding site; it reads GESGAGKT. Residues 690 to 712 form an actin-binding region; that stretch reads LNSLMTTINSTNPHYIRCIKPNT. IQ domains lie at 843-872, 866-895, and 940-969; these read MINS…SSIY, TKHS…ENSA, and RIKK…EAKS. Disordered regions lie at residues 1070–1176, 1218–1282, and 1312–1343; these read EKQH…NNVD, VKKS…PINM, and LNNG…KHIQ. The segment covering 1077–1111 has biased composition (polar residues); that stretch reads YKNNEVVGNTSFEGSTTTNNGVTSPPKSSPASPIR. Positions 1112 to 1139 are enriched in low complexity; the sequence is NSINSNSDTTISGSSDDSIDNTDSLILS. Positions 1143–1153 are enriched in basic and acidic residues; it reads HKGEDRKRNHE. A coiled-coil region spans residues 1180-1224; sequence RRQFNELEKEYKELKQMDETHKQYIESLKLQITQLEEKVKKSSSH. Low complexity predominate over residues 1253-1281; it reads NSSSHHQQQQQQHNISPSNSITSTTSPIN. The Dilute domain maps to 1427–1695; sequence TGVLDPIETN…LTSLMDSPKY (269 aa).

It belongs to the TRAFAC class myosin-kinesin ATPase superfamily. Myosin family. As to quaternary structure, myosin I heavy chain is single-headed. Dimer of a heavy and a light chain. Inability to self-assemble into filaments.

Myosin is a protein that binds to actin and has ATPase activity that is activated by actin. The protein is Myosin-H heavy chain (myoH) of Dictyostelium discoideum (Social amoeba).